The following is a 1207-amino-acid chain: DNA-directed RNA polymerase subunit beta' (1207 aa).

4 residues coordinate Zn(2+): Cys-60, Cys-62, Cys-75, and Cys-78. Mg(2+) contacts are provided by Asp-450, Asp-452, and Asp-454. Zn(2+) is bound by residues Cys-819, Cys-893, Cys-900, and Cys-903.

The protein belongs to the RNA polymerase beta' chain family. In terms of assembly, the RNAP catalytic core consists of 2 alpha, 1 beta, 1 beta' and 1 omega subunit. When a sigma factor is associated with the core the holoenzyme is formed, which can initiate transcription. It depends on Mg(2+) as a cofactor. Requires Zn(2+) as cofactor.

The catalysed reaction is RNA(n) + a ribonucleoside 5'-triphosphate = RNA(n+1) + diphosphate. In terms of biological role, DNA-dependent RNA polymerase catalyzes the transcription of DNA into RNA using the four ribonucleoside triphosphates as substrates. The chain is DNA-directed RNA polymerase subunit beta' from Streptococcus pyogenes serotype M12 (strain MGAS2096).